The primary structure comprises 289 residues: Bifunctional protein FolD (289 aa).

NADP(+) contacts are provided by residues 166 to 168 (GRS), Ser-191, and Ile-232.

The protein belongs to the tetrahydrofolate dehydrogenase/cyclohydrolase family. Homodimer.

It catalyses the reaction (6R)-5,10-methylene-5,6,7,8-tetrahydrofolate + NADP(+) = (6R)-5,10-methenyltetrahydrofolate + NADPH. The enzyme catalyses (6R)-5,10-methenyltetrahydrofolate + H2O = (6R)-10-formyltetrahydrofolate + H(+). The protein operates within one-carbon metabolism; tetrahydrofolate interconversion. In terms of biological role, catalyzes the oxidation of 5,10-methylenetetrahydrofolate to 5,10-methenyltetrahydrofolate and then the hydrolysis of 5,10-methenyltetrahydrofolate to 10-formyltetrahydrofolate. The chain is Bifunctional protein FolD from Synechococcus elongatus (strain ATCC 33912 / PCC 7942 / FACHB-805) (Anacystis nidulans R2).